A 358-amino-acid polypeptide reads, in one-letter code: DNA polymerase IV (358 aa).

In terms of domain architecture, UmuC spans 4–185 (IIHIDMDCYF…LSLRKIPGVG (182 aa)). Aspartate 8 and aspartate 103 together coordinate Mg(2+). The active site involves glutamate 104.

It belongs to the DNA polymerase type-Y family. In terms of assembly, monomer. The cofactor is Mg(2+).

It localises to the cytoplasm. It carries out the reaction DNA(n) + a 2'-deoxyribonucleoside 5'-triphosphate = DNA(n+1) + diphosphate. Functionally, poorly processive, error-prone DNA polymerase involved in untargeted mutagenesis. Copies undamaged DNA at stalled replication forks, which arise in vivo from mismatched or misaligned primer ends. These misaligned primers can be extended by PolIV. Exhibits no 3'-5' exonuclease (proofreading) activity. May be involved in translesional synthesis, in conjunction with the beta clamp from PolIII. This is DNA polymerase IV from Shewanella baltica (strain OS155 / ATCC BAA-1091).